Consider the following 188-residue polypeptide: dCTP deaminase (188 aa).

Residues 111–116 (KSTYAR), 135–137 (TLE), Gln156, Tyr170, and Gln180 contribute to the dCTP site. The active-site Proton donor/acceptor is Glu137.

This sequence belongs to the dCTP deaminase family. Homotrimer.

The enzyme catalyses dCTP + H2O + H(+) = dUTP + NH4(+). The protein operates within pyrimidine metabolism; dUMP biosynthesis; dUMP from dCTP (dUTP route): step 1/2. In terms of biological role, catalyzes the deamination of dCTP to dUTP. The sequence is that of dCTP deaminase from Pseudomonas putida (strain GB-1).